A 339-amino-acid polypeptide reads, in one-letter code: Phenylalanine--tRNA ligase alpha subunit (339 aa).

Glu-250 is a binding site for Mg(2+).

This sequence belongs to the class-II aminoacyl-tRNA synthetase family. Phe-tRNA synthetase alpha subunit type 1 subfamily. As to quaternary structure, tetramer of two alpha and two beta subunits. It depends on Mg(2+) as a cofactor.

It is found in the cytoplasm. The enzyme catalyses tRNA(Phe) + L-phenylalanine + ATP = L-phenylalanyl-tRNA(Phe) + AMP + diphosphate + H(+). The protein is Phenylalanine--tRNA ligase alpha subunit of Parabacteroides distasonis (strain ATCC 8503 / DSM 20701 / CIP 104284 / JCM 5825 / NCTC 11152).